Consider the following 91-residue polypeptide: Late embryogenis abundant protein 2 (91 aa).

Positions 47-72 are disordered; that stretch reads KRAGEASSEKAPWVPDPKTGYYRPET.

The protein belongs to the LEA type 3 family.

The protein resides in the cytoplasm. It is found in the nucleus. In Arabidopsis thaliana (Mouse-ear cress), this protein is Late embryogenis abundant protein 2.